We begin with the raw amino-acid sequence, 409 residues long: Pentatricopeptide repeat-containing protein At5g09450, mitochondrial (409 aa).

Residues 1-38 (MATRSLFHSLRCRLTNNGVLGSNFIRNAESSRFSKSYN) constitute a mitochondrion transit peptide. PPR repeat units follow at residues 155 to 189 (TAET…DSLT), 191 to 225 (GAIT…KVSP), 226 to 256 (DIFT…MRHD), 262 to 296 (GWVR…SISQ), 298 to 332 (EWIT…NQIL), and 333 to 367 (SSRS…KTTE).

The protein belongs to the PPR family. P subfamily.

The protein resides in the mitochondrion. In Arabidopsis thaliana (Mouse-ear cress), this protein is Pentatricopeptide repeat-containing protein At5g09450, mitochondrial.